The following is a 232-amino-acid chain: tRNA (guanine-N(1)-)-methyltransferase (232 aa).

Residues G112 and I132–L137 each bind S-adenosyl-L-methionine.

Belongs to the RNA methyltransferase TrmD family. As to quaternary structure, homodimer.

The protein resides in the cytoplasm. The catalysed reaction is guanosine(37) in tRNA + S-adenosyl-L-methionine = N(1)-methylguanosine(37) in tRNA + S-adenosyl-L-homocysteine + H(+). Specifically methylates guanosine-37 in various tRNAs. The chain is tRNA (guanine-N(1)-)-methyltransferase from Methylacidiphilum infernorum (isolate V4) (Methylokorus infernorum (strain V4)).